A 231-amino-acid chain; its full sequence is MLSTPVTSQLRLKEFQDVYEPAEDTFALLDALEKDAKKLRQMAEMKNLLTAEIGCGSGCASSFLKSGILKNKPIVHFMSDISNSACRASKITALNNRELYKDDNGLFITVQTSFLDGIRLGNGVDILIFNPPYVPTEFEEIPSEAATIASAWAGGTDGMDVTSTLLNQLKDILSQDGVFYMVAVARNKLHSICEILQKDGFIVNETLKRKAGRETLSILRIYRIGNTIWDE.

S-adenosyl-L-methionine contacts are provided by residues glycine 54 to glycine 58, aspartate 80, and asparagine 130. Residue asparagine 130–tyrosine 133 participates in substrate binding.

The protein belongs to the eukaryotic/archaeal PrmC-related family. Heterodimer of mtq2-trm112. mtq2 is the catalytic subunit carrying the catalytic and the S-adenosyl L-methionine binding sites.

It is found in the cytoplasm. It localises to the nucleus. It carries out the reaction L-glutaminyl-[peptide chain release factor] + S-adenosyl-L-methionine = N(5)-methyl-L-glutaminyl-[peptide chain release factor] + S-adenosyl-L-homocysteine + H(+). Methylates eRF1 on 'Gln-182' using S-adenosyl L-methionine as methyl donor. eRF1 needs to be complexed to eRF3 in its GTP-bound form to be efficiently methylated. The chain is eRF1 methyltransferase catalytic subunit mtq2 (mtq2) from Schizosaccharomyces pombe (strain 972 / ATCC 24843) (Fission yeast).